An 80-amino-acid polypeptide reads, in one-letter code: Prehead core component PIP (80 aa).

The tract at residues 43-80 (FLIEGEEPEDEDEDEDDEDSDDKDDKKDEDSDEDEDDE) is disordered. The segment covering 46 to 64 (EGEEPEDEDEDEDDEDSDD) has biased composition (acidic residues).

Functionally, the production of one phage particle requires 250 copies of PIP. During head maturation, PIP is cleaved to form the stable head constituent, internal peptide II. This Escherichia coli (Bacteriophage T4) protein is Prehead core component PIP (67).